The following is a 129-amino-acid chain: MFAVIKTGGRQYRVAPDDVLEVGKIEGEVGSIVQLNEVLVVGGDTPILGLPTVAGASVAVEVLDHKRGPKVIAFKKRRRKNSRRKRGYRDEITVLRVSEILTDNAKPTKGPRPKKEKVAKEATKEDAAA.

A disordered region spans residues 102 to 129; sequence TDNAKPTKGPRPKKEKVAKEATKEDAAA. Residues 116-129 show a composition bias toward basic and acidic residues; sequence EKVAKEATKEDAAA.

The protein belongs to the bacterial ribosomal protein bL21 family. In terms of assembly, part of the 50S ribosomal subunit. Contacts protein L20.

This protein binds to 23S rRNA in the presence of protein L20. The protein is Large ribosomal subunit protein bL21 of Bradyrhizobium diazoefficiens (strain JCM 10833 / BCRC 13528 / IAM 13628 / NBRC 14792 / USDA 110).